The sequence spans 625 residues: Phosphomethylpyrimidine synthase (625 aa).

Residues Asn-230, Met-259, Tyr-288, His-324, 344-346, 385-388, and Glu-424 each bind substrate; these read SRG and DGLR. His-428 serves as a coordination point for Zn(2+). Tyr-451 provides a ligand contact to substrate. His-492 lines the Zn(2+) pocket. Positions 572, 575, and 580 each coordinate [4Fe-4S] cluster.

The protein belongs to the ThiC family. As to quaternary structure, homodimer. It depends on [4Fe-4S] cluster as a cofactor.

It catalyses the reaction 5-amino-1-(5-phospho-beta-D-ribosyl)imidazole + S-adenosyl-L-methionine = 4-amino-2-methyl-5-(phosphooxymethyl)pyrimidine + CO + 5'-deoxyadenosine + formate + L-methionine + 3 H(+). The protein operates within cofactor biosynthesis; thiamine diphosphate biosynthesis. Catalyzes the synthesis of the hydroxymethylpyrimidine phosphate (HMP-P) moiety of thiamine from aminoimidazole ribotide (AIR) in a radical S-adenosyl-L-methionine (SAM)-dependent reaction. The protein is Phosphomethylpyrimidine synthase of Xanthomonas axonopodis pv. citri (strain 306).